The following is a 367-amino-acid chain: UDP-N-acetylglucosamine--N-acetylmuramyl-(pentapeptide) pyrophosphoryl-undecaprenol N-acetylglucosamine transferase (367 aa).

Residues 15 to 17, Asn127, Arg163, Ser191, Ile249, and Gln294 each bind UDP-N-acetyl-alpha-D-glucosamine; that span reads TGG.

This sequence belongs to the glycosyltransferase 28 family. MurG subfamily.

It localises to the cell inner membrane. The enzyme catalyses di-trans,octa-cis-undecaprenyl diphospho-N-acetyl-alpha-D-muramoyl-L-alanyl-D-glutamyl-meso-2,6-diaminopimeloyl-D-alanyl-D-alanine + UDP-N-acetyl-alpha-D-glucosamine = di-trans,octa-cis-undecaprenyl diphospho-[N-acetyl-alpha-D-glucosaminyl-(1-&gt;4)]-N-acetyl-alpha-D-muramoyl-L-alanyl-D-glutamyl-meso-2,6-diaminopimeloyl-D-alanyl-D-alanine + UDP + H(+). Its pathway is cell wall biogenesis; peptidoglycan biosynthesis. In terms of biological role, cell wall formation. Catalyzes the transfer of a GlcNAc subunit on undecaprenyl-pyrophosphoryl-MurNAc-pentapeptide (lipid intermediate I) to form undecaprenyl-pyrophosphoryl-MurNAc-(pentapeptide)GlcNAc (lipid intermediate II). This Burkholderia mallei (strain NCTC 10247) protein is UDP-N-acetylglucosamine--N-acetylmuramyl-(pentapeptide) pyrophosphoryl-undecaprenol N-acetylglucosamine transferase.